A 110-amino-acid polypeptide reads, in one-letter code: Circadian clock oscillator protein KaiB (110 aa).

The protein belongs to the KaiB family. The KaiABC complex composition changes during the circadian cycle to control KaiC phosphorylation. Complexes KaiC(6), KaiA(2-4):KaiC(6), KaiB(6):KaiC(6) and KaiC(6):KaiB(6):KaiA(12) are among the most important forms, many form cooperatively. Undergoes a major conformational rearrangment; in the free state forms homotetramers as a dimer of dimers. When bound to the CI domain of KaiC switches to a monomeric thioredoxin-fold (KaiB(fs)). KaiB(fs) binds CikA, leading it to dephosphorylate phospho-RpaA.

Functionally, key component of the KaiABC oscillator complex, which constitutes the main circadian regulator in cyanobacteria. Complex composition changes during the circadian cycle to control KaiC phosphorylation. KaiA stimulates KaiC autophosphorylation, while KaiB sequesters KaiA, leading to KaiC autodephosphorylation. Phospho-Ser-431 KaiC accumulation triggers binding of KaiB to form the KaiB(6):KaiC(6) complex, leading to changes in output regulators CikA and SasA. KaiB switches to a thioredoxin-like fold (KaiB(fs)) when bound to KaiC. KaiB(6):KaiC(6) formation exposes a site for KaiA binding that sequesters KaiA from KaiC, making the KaiC(6):KaiB(6):KaiA(12) complex that results in KaiC autodephosphorylation. In terms of biological role, a metamorphic protein which reversibly switches between an inactive tetrameric fold and a rare, thioredoxin-like monomeric fold (KaiB(fs)). KaiB(fs) binds phospho-KaiC, KaiA and CikA. KaiA and CikA compete for binding to KaiB(fs), and KaiB(fs) and SasA compete for binding to KaiC, thus the clock oscillator and output signal pathway are tightly coupled. This is Circadian clock oscillator protein KaiB from Synechococcus sp. (strain RCC307).